The following is a 354-amino-acid chain: Peptide chain release factor 1 (354 aa).

N5-methylglutamine is present on Gln-231. The span at 284–304 (EALAKDRKEQVGSGDRSERIR) shows a compositional bias: basic and acidic residues. The tract at residues 284 to 308 (EALAKDRKEQVGSGDRSERIRTYNF) is disordered.

It belongs to the prokaryotic/mitochondrial release factor family. Methylated by PrmC. Methylation increases the termination efficiency of RF1.

Its subcellular location is the cytoplasm. Functionally, peptide chain release factor 1 directs the termination of translation in response to the peptide chain termination codons UAG and UAA. This is Peptide chain release factor 1 from Nitratiruptor sp. (strain SB155-2).